The following is a 397-amino-acid chain: Chalcone synthase 2 (397 aa).

The active site involves Cys-168.

This sequence belongs to the thiolase-like superfamily. Chalcone/stilbene synthases family.

It carries out the reaction (E)-4-coumaroyl-CoA + 3 malonyl-CoA + 3 H(+) = 2',4,4',6'-tetrahydroxychalcone + 3 CO2 + 4 CoA. Its pathway is secondary metabolite biosynthesis; flavonoid biosynthesis. Functionally, the primary product of this enzyme is 4,2',4',6'-tetrahydroxychalcone (also termed naringenin-chalcone or chalcone) which can under specific conditions spontaneously isomerize into naringenin. This chain is Chalcone synthase 2 (CHS2), found in Daucus carota (Wild carrot).